The primary structure comprises 473 residues: Photosystem II CP43 reaction center protein (473 aa).

A propeptide spanning residues 1-14 is cleaved from the precursor; it reads MKTLYSLRRFYHVE. Threonine 15 is subject to N-acetylthreonine. Residue threonine 15 is modified to Phosphothreonine. The next 5 membrane-spanning stretches (helical) occupy residues 69 to 93, 134 to 155, 178 to 200, 255 to 275, and 291 to 312; these read LFEVAHFVPEKPMYEQGLILLPHLA, LLGPETLEESFPFFGYVWKDRN, KALYFGGVYDTWAPGGGDVRKIT, KPFAWARRALVWSGEAYLSYS, and CFNNTAYPSEFYGPTGPEASQA. [CaMn4O5] cluster is bound at residue glutamate 367. The helical transmembrane segment at 447–471 threads the bilayer; sequence RARAAAAGFEKGIDRDFEPVLSMTP.

The protein belongs to the PsbB/PsbC family. PsbC subfamily. In terms of assembly, PSII is composed of 1 copy each of membrane proteins PsbA, PsbB, PsbC, PsbD, PsbE, PsbF, PsbH, PsbI, PsbJ, PsbK, PsbL, PsbM, PsbT, PsbX, PsbY, PsbZ, Psb30/Ycf12, at least 3 peripheral proteins of the oxygen-evolving complex and a large number of cofactors. It forms dimeric complexes. The cofactor is Binds multiple chlorophylls and provides some of the ligands for the Ca-4Mn-5O cluster of the oxygen-evolving complex. It may also provide a ligand for a Cl- that is required for oxygen evolution. PSII binds additional chlorophylls, carotenoids and specific lipids..

The protein localises to the plastid. It localises to the chloroplast thylakoid membrane. Functionally, one of the components of the core complex of photosystem II (PSII). It binds chlorophyll and helps catalyze the primary light-induced photochemical processes of PSII. PSII is a light-driven water:plastoquinone oxidoreductase, using light energy to abstract electrons from H(2)O, generating O(2) and a proton gradient subsequently used for ATP formation. The polypeptide is Photosystem II CP43 reaction center protein (Jasminum nudiflorum (Winter jasmine)).